The sequence spans 160 residues: Arginine repressor (160 aa).

It belongs to the ArgR family.

It localises to the cytoplasm. Its pathway is amino-acid biosynthesis; L-arginine biosynthesis [regulation]. In terms of biological role, regulates arginine biosynthesis genes. This chain is Arginine repressor, found in Anaeromyxobacter dehalogenans (strain 2CP-1 / ATCC BAA-258).